Reading from the N-terminus, the 373-residue chain is 3-isopropylmalate dehydrogenase gloI (373 aa).

Substrate-binding residues include serine 92, arginine 98, and arginine 108. Aspartate 228, aspartate 253, and aspartate 257 together coordinate Mg(2+). NADP(+) contacts are provided by residues 294–300 (HGSAPDI) and asparagine 307.

This sequence belongs to the isocitrate and isopropylmalate dehydrogenases family. Homodimer. Requires Mg(2+) as cofactor. Mn(2+) is required as a cofactor.

It catalyses the reaction (2R,3S)-3-isopropylmalate + NAD(+) = 4-methyl-2-oxopentanoate + CO2 + NADH. It functions in the pathway mycotoxin biosynthesis. In terms of biological role, 3-isopropylmalate dehydrogenase; part of the gene cluster that mediates the biosynthesis of pneumocandins, lipohexapeptides of the echinocandin family that prevent fungal cell wall formation by non-competitive inhibition of beta-1,3-glucan synthase. The 10,12-dimethylmyristoyl side chain is synthesized by the reducing polyketide synthase gloL/GLPKS4. The thioesterase gloN/GLHYD exclusively interacts with gloL/GLPKS4 to maintain turnover of the polyketide side chain. The 10R,12S-dimethylmyristic acid is then transferred to the first thiolation domain of the nonribosomal peptide synthetase gloA/GLNRPS4 by the acyl-AMP ligase gloD/GLligase, followed by its acylation to L-ornithine to trigger elongation of the cyclic hexapeptide. L-ornithine, 4R-hydroxyl-L-proline (generated from L-proline by the dioxygenase gloF/GLOXY2), 3S-hydroxyl-L-homotyrosine (generated by gloG/GLHtyB, gloH/GLHtyA, gloI/GLHtyC, gloJ/GLHtyD and hydroxylated at C-3 by the dioxygenase gloM/GLOXY1), 3R-hydroxyl-L-glutamine (generated from L-glutamine probably by the dioxygenase gloE/GLOXY3) and 3S-hydroxyl-L-proline (generated from L-proline by the dioxygenase gloF/GLOXY2 to yield pneumocandin B0), or 3S-hydroxyl-4S-methyl-L-proline (generated from L-leucine by the dioxygenase gloC/GLOXY4 to yield pneumocandin A0) are sequentially added to the growing chain. The last C domain of gloA/GLNRPS4 is proposed to be responsible for cyclization by condensation to form the peptide bond between L-ornithine and 3S-hydroxyl-4S-methyl-L-proline (for pneumocandin A0) or 3S-hydroxyl-L-proline (for pneumocandin B0). Finally, the subsequent C-4 hydroxylation of 3S-hydroxyl-L-homotyrosine and L-ornithine dihydroxylation at C-4 and C-5 are performed by the cytochrome P450 monooxygenases gloP/GLP450-1 and gloO/GLP450-2, respectively. This chain is 3-isopropylmalate dehydrogenase gloI, found in Glarea lozoyensis (strain ATCC 20868 / MF5171).